Reading from the N-terminus, the 169-residue chain is Probable prefoldin subunit 3 (169 aa).

The protein belongs to the prefoldin subunit alpha family. In terms of assembly, heterohexamer of two PFD-alpha type and four PFD-beta type subunits.

Its function is as follows. Binds specifically to cytosolic chaperonin (c-CPN) and transfers target proteins to it. Binds to nascent polypeptide chain and promotes folding in an environment in which there are many competing pathways for nonnative proteins. The sequence is that of Probable prefoldin subunit 3 from Schizosaccharomyces pombe (strain 972 / ATCC 24843) (Fission yeast).